Here is a 90-residue protein sequence, read N- to C-terminus: uncharacterized protein (90 aa).

An N-terminal signal peptide occupies residues M1–A20. Residues Q31–P50 are disordered.

It localises to the secreted. This is an uncharacterized protein from Rattus norvegicus (Rat).